The chain runs to 359 residues: ATP-dependent kinase YFH7 (359 aa).

31-39 lines the ATP pocket; the sequence is GPPGSGKST.

The protein belongs to the YFH7 family.

Its function is as follows. ATP-dependent kinase that could be involved in endoplasmic reticulum membrane assembly. This chain is ATP-dependent kinase YFH7 (YFH7), found in Vanderwaltozyma polyspora (strain ATCC 22028 / DSM 70294 / BCRC 21397 / CBS 2163 / NBRC 10782 / NRRL Y-8283 / UCD 57-17) (Kluyveromyces polysporus).